Consider the following 217-residue polypeptide: Thiamine-phosphate synthase (217 aa).

Residues 41–45 (QYRDK) and Asn-76 contribute to the 4-amino-2-methyl-5-(diphosphooxymethyl)pyrimidine site. 2 residues coordinate Mg(2+): Asp-77 and Asp-96. Ser-115 contacts 4-amino-2-methyl-5-(diphosphooxymethyl)pyrimidine. 142-144 (SPS) contributes to the 2-[(2R,5Z)-2-carboxy-4-methylthiazol-5(2H)-ylidene]ethyl phosphate binding site. 4-amino-2-methyl-5-(diphosphooxymethyl)pyrimidine is bound at residue Lys-145. 2-[(2R,5Z)-2-carboxy-4-methylthiazol-5(2H)-ylidene]ethyl phosphate-binding positions include Gly-172 and 192 to 193 (IS).

The protein belongs to the thiamine-phosphate synthase family. Requires Mg(2+) as cofactor.

It carries out the reaction 2-[(2R,5Z)-2-carboxy-4-methylthiazol-5(2H)-ylidene]ethyl phosphate + 4-amino-2-methyl-5-(diphosphooxymethyl)pyrimidine + 2 H(+) = thiamine phosphate + CO2 + diphosphate. The enzyme catalyses 2-(2-carboxy-4-methylthiazol-5-yl)ethyl phosphate + 4-amino-2-methyl-5-(diphosphooxymethyl)pyrimidine + 2 H(+) = thiamine phosphate + CO2 + diphosphate. The catalysed reaction is 4-methyl-5-(2-phosphooxyethyl)-thiazole + 4-amino-2-methyl-5-(diphosphooxymethyl)pyrimidine + H(+) = thiamine phosphate + diphosphate. Its pathway is cofactor biosynthesis; thiamine diphosphate biosynthesis; thiamine phosphate from 4-amino-2-methyl-5-diphosphomethylpyrimidine and 4-methyl-5-(2-phosphoethyl)-thiazole: step 1/1. In terms of biological role, condenses 4-methyl-5-(beta-hydroxyethyl)thiazole monophosphate (THZ-P) and 2-methyl-4-amino-5-hydroxymethyl pyrimidine pyrophosphate (HMP-PP) to form thiamine monophosphate (TMP). The protein is Thiamine-phosphate synthase of Acidithiobacillus ferrooxidans (strain ATCC 23270 / DSM 14882 / CIP 104768 / NCIMB 8455) (Ferrobacillus ferrooxidans (strain ATCC 23270)).